The sequence spans 60 residues: MAVPARHTSKAKKNKRRTHYKLTAPSVQFDETTGDFSRSHRVSLKGYYKGRKIAKANEAK.

The segment at 1–21 (MAVPARHTSKAKKNKRRTHYK) is disordered. The segment covering 7-20 (HTSKAKKNKRRTHY) has biased composition (basic residues).

The protein belongs to the bacterial ribosomal protein bL32 family.

The protein is Large ribosomal subunit protein bL32 of Streptococcus uberis (strain ATCC BAA-854 / 0140J).